Here is a 475-residue protein sequence, read N- to C-terminus: MQETTVKRDGASPSDAGTPATTAQGLGKLYIRTFGCQMNEYDSDKMADVLRADQGLELTDNPEDADVILFNTCSVREKAQEKVFSDLGRVQHLKKQNPNLVIGVGGCVASQEGEAIVKRAPYVDVVFGPQTLHRLPDLIKRRRAQGVSQVDISFPEIEKFDALPPPRVDGATAFVSIMEGCSKYCSFCVVPYTRGEEVSRPFDDVLLEVADLADQGVKEVTLLGQNVNAYRGAMGDSGEIADFAMLLEYVHEIPGIERIRYTTSHPKEMTQRMVDAYARLPKLVSFLHLPVQAGSDRVLAAMKRGYTALEFKSVVRRLRAARPSLTLSSDFIVGFPGETEEDFQKTMKLIEDVGFDTSFSFVYSRRPGTPAADLHDDTPQDVKLRRLQQLQALINQQAAAIAQGMIGTRQRVLVEGPSRRDPNELMGRTENNRIVNFPGVPRLIGHMVDVVVTHAHTNSLRGRVAGIERDTSGAE.

Residues 1–10 (MQETTVKRDG) are compositionally biased toward basic and acidic residues. Positions 1–22 (MQETTVKRDGASPSDAGTPATT) are disordered. Residues 27–144 (GKLYIRTFGC…LPDLIKRRRA (118 aa)) enclose the MTTase N-terminal domain. Residues C36, C73, C107, C181, C185, and C188 each coordinate [4Fe-4S] cluster. A Radical SAM core domain is found at 167–400 (RVDGATAFVS…QALINQQAAA (234 aa)). Residues 403-466 (QGMIGTRQRV…TNSLRGRVAG (64 aa)) form the TRAM domain.

It belongs to the methylthiotransferase family. MiaB subfamily. As to quaternary structure, monomer. It depends on [4Fe-4S] cluster as a cofactor.

The protein resides in the cytoplasm. The catalysed reaction is N(6)-dimethylallyladenosine(37) in tRNA + (sulfur carrier)-SH + AH2 + 2 S-adenosyl-L-methionine = 2-methylsulfanyl-N(6)-dimethylallyladenosine(37) in tRNA + (sulfur carrier)-H + 5'-deoxyadenosine + L-methionine + A + S-adenosyl-L-homocysteine + 2 H(+). In terms of biological role, catalyzes the methylthiolation of N6-(dimethylallyl)adenosine (i(6)A), leading to the formation of 2-methylthio-N6-(dimethylallyl)adenosine (ms(2)i(6)A) at position 37 in tRNAs that read codons beginning with uridine. The protein is tRNA-2-methylthio-N(6)-dimethylallyladenosine synthase of Bordetella bronchiseptica (strain ATCC BAA-588 / NCTC 13252 / RB50) (Alcaligenes bronchisepticus).